We begin with the raw amino-acid sequence, 157 residues long: MADKNERPIKVMAENRKARFNYAIEDTIEAGIALTGTEVKSIRNGKSTIAESYADSKNGEIWLINATIPEYLQGNRFNHEPKRPRKLLLHRRQINKLIGAVDREGMTLIPLKLYFNERGRAKLQLAVAKGKKLHDKRETEKKRDWSREKGRLLRARG.

A disordered region spans residues 133-157; that stretch reads LHDKRETEKKRDWSREKGRLLRARG. A compositionally biased stretch (basic and acidic residues) spans 135–151; that stretch reads DKRETEKKRDWSREKGR.

This sequence belongs to the SmpB family.

The protein resides in the cytoplasm. Its function is as follows. Required for rescue of stalled ribosomes mediated by trans-translation. Binds to transfer-messenger RNA (tmRNA), required for stable association of tmRNA with ribosomes. tmRNA and SmpB together mimic tRNA shape, replacing the anticodon stem-loop with SmpB. tmRNA is encoded by the ssrA gene; the 2 termini fold to resemble tRNA(Ala) and it encodes a 'tag peptide', a short internal open reading frame. During trans-translation Ala-aminoacylated tmRNA acts like a tRNA, entering the A-site of stalled ribosomes, displacing the stalled mRNA. The ribosome then switches to translate the ORF on the tmRNA; the nascent peptide is terminated with the 'tag peptide' encoded by the tmRNA and targeted for degradation. The ribosome is freed to recommence translation, which seems to be the essential function of trans-translation. This is SsrA-binding protein from Bradyrhizobium diazoefficiens (strain JCM 10833 / BCRC 13528 / IAM 13628 / NBRC 14792 / USDA 110).